Reading from the N-terminus, the 894-residue chain is Alpha-actinin-2 (894 aa).

An actin-binding region spans residues 1–254 (MNQIEPGVQY…IMTYVSCFYH (254 aa)). Calponin-homology (CH) domains follow at residues 38 to 142 (KQQR…LRFA) and 151 to 257 (TSAK…HAFA). The residue at position 237 (T237) is a Phosphothreonine. Spectrin repeat units lie at residues 281 to 391 (RLME…WLLN), 401 to 506 (HLAE…ALER), 516 to 627 (QLHL…SLQE), and 637 to 740 (RLRR…EVET). 2 EF-hand domains span residues 753-788 (EQMNEFRASFNHFDRRKNGLMDHEDFRACLISMGYD) and 789-824 (LGEAEFARIMTLVDPNGQGTVTFQSFIDFMTRETAD). 6 residues coordinate Ca(2+): D766, N770, D777, D802, N804, and T808.

It belongs to the alpha-actinin family. Homodimer; antiparallel. Also forms heterodimers with ACTN3. Interacts with ADAM12, MYOZ1, MYOZ2 and MYOZ3. Interacts via its C-terminal region with the LDB3 PDZ domain. Interacts with XIRP2. Interacts with DST (via N-terminus). Interacts with PARVB. Interacts with SYNPO2. Post-translationally, ubiquitinated by FBXL22, leading to proteasomal degradation.

The protein resides in the cytoplasm. The protein localises to the myofibril. It localises to the sarcomere. It is found in the z line. Its function is as follows. F-actin cross-linking protein which is thought to anchor actin to a variety of intracellular structures. This is a bundling protein. This Bos taurus (Bovine) protein is Alpha-actinin-2 (ACTN2).